We begin with the raw amino-acid sequence, 485 residues long: Glutamyl-tRNA(Gln) amidotransferase subunit A (485 aa).

Residues Lys78 and Ser153 each act as charge relay system in the active site. Catalysis depends on Ser177, which acts as the Acyl-ester intermediate.

Belongs to the amidase family. GatA subfamily. As to quaternary structure, heterotrimer of A, B and C subunits.

The enzyme catalyses L-glutamyl-tRNA(Gln) + L-glutamine + ATP + H2O = L-glutaminyl-tRNA(Gln) + L-glutamate + ADP + phosphate + H(+). Its function is as follows. Allows the formation of correctly charged Gln-tRNA(Gln) through the transamidation of misacylated Glu-tRNA(Gln) in organisms which lack glutaminyl-tRNA synthetase. The reaction takes place in the presence of glutamine and ATP through an activated gamma-phospho-Glu-tRNA(Gln). This chain is Glutamyl-tRNA(Gln) amidotransferase subunit A, found in Trichlorobacter lovleyi (strain ATCC BAA-1151 / DSM 17278 / SZ) (Geobacter lovleyi).